An 88-amino-acid polypeptide reads, in one-letter code: Alpha-latrotoxin associated low molecular weight protein 2 (88 aa).

Residues 1-19 form the signal peptide; it reads MLKLICIAFLVTVLTLVAG. Cystine bridges form between C30–C66, C46–C62, and C49–C75.

It belongs to the arthropod CHH/MIH/GIH/VIH hormone family. Expressed by the venom gland.

Its subcellular location is the secreted. Its function is as follows. May increase the toxicity of alpha-latrotoxin and/or other venom components. Is non-toxic to mice and to the cockroach Periplaneta americana. The chain is Alpha-latrotoxin associated low molecular weight protein 2 from Latrodectus hesperus (Western black widow spider).